The primary structure comprises 440 residues: Methionine aminopeptidase 2-2 (440 aa).

The tract at residues 1 to 102 (MAAQVPTEAL…KGQEEEYRDE (102 aa)) is disordered. Residues 36 to 46 (DSDDSDEEGEE) are compositionally biased toward acidic residues. Residues 56–70 (AKKKKKNKKKKKKKS) are compositionally biased toward basic residues. Substrate is bound at residue histidine 194. Residues aspartate 214, aspartate 225, and histidine 294 each coordinate a divalent metal cation. Histidine 302 is a binding site for substrate. A divalent metal cation is bound by residues glutamate 327 and glutamate 421.

It belongs to the peptidase M24A family. Methionine aminopeptidase eukaryotic type 2 subfamily. It depends on Co(2+) as a cofactor. Zn(2+) is required as a cofactor. Requires Mn(2+) as cofactor. The cofactor is Fe(2+).

The protein resides in the cytoplasm. It catalyses the reaction Release of N-terminal amino acids, preferentially methionine, from peptides and arylamides.. Cotranslationally removes the N-terminal methionine from nascent proteins. The N-terminal methionine is often cleaved when the second residue in the primary sequence is small and uncharged (Met-Ala-, Cys, Gly, Pro, Ser, Thr, or Val). The protein is Methionine aminopeptidase 2-2 of Colletotrichum graminicola (strain M1.001 / M2 / FGSC 10212) (Maize anthracnose fungus).